A 175-amino-acid chain; its full sequence is Small ribosomal subunit protein uS5 (175 aa).

Residues 11–74 (LSEVLVDVNR…QAAKKRMMKV (64 aa)) enclose the S5 DRBM domain.

This sequence belongs to the universal ribosomal protein uS5 family. Part of the 30S ribosomal subunit. Contacts proteins S4 and S8.

In terms of biological role, with S4 and S12 plays an important role in translational accuracy. Its function is as follows. Located at the back of the 30S subunit body where it stabilizes the conformation of the head with respect to the body. This chain is Small ribosomal subunit protein uS5, found in Rickettsia prowazekii (strain Madrid E).